A 333-amino-acid chain; its full sequence is Ribosomal RNA large subunit methyltransferase F (333 aa).

A compositionally biased stretch (basic residues) spans 1–10 (MPQPPKRPRK). Positions 1–31 (MPQPPKRPRKPAPAAVKTAPAKGELHPRNRH) are disordered. A compositionally biased stretch (low complexity) spans 12 to 22 (APAAVKTAPAK).

This sequence belongs to the methyltransferase superfamily. METTL16/RlmF family.

It localises to the cytoplasm. It carries out the reaction adenosine(1618) in 23S rRNA + S-adenosyl-L-methionine = N(6)-methyladenosine(1618) in 23S rRNA + S-adenosyl-L-homocysteine + H(+). In terms of biological role, specifically methylates the adenine in position 1618 of 23S rRNA. This chain is Ribosomal RNA large subunit methyltransferase F, found in Ectopseudomonas mendocina (strain ymp) (Pseudomonas mendocina).